The primary structure comprises 212 residues: Nucleoside diphosphate kinase homolog 5 (212 aa).

The segment at 13–145 is NDK; it reads EKTLAIIKPD…EREIRFMFPE (133 aa).

The protein belongs to the NDK family. Component of the axonemal radial spoke complex 1 (RS1), at least composed of spoke head proteins RSPH1, RSPH3, RSPH9 and the cilia-specific component RSPH4A or sperm-specific component RSPH6A, spoke stalk proteins RSPH14, DNAJB13, DYDC1, ROPN1L and NME5, and the anchor protein IQUB. Interacts with IQUB. In terms of tissue distribution, specifically expressed in testis germinal cells.

The protein localises to the cell projection. It localises to the cilium. Its subcellular location is the cytoplasm. It is found in the cytoskeleton. The protein resides in the flagellum axoneme. Functionally, functions as part of axonemal radial spoke complexes that play an important part in the motility of sperm and cilia. Does not seem to have nucleoside diphosphate kinase (NDPK) activity. Confers protection from cell death by BAX and alters the cellular levels of several antioxidant enzymes including GPX5. May play a role in spermiogenesis by increasing the ability of late-stage spermatids to eliminate reactive oxygen species. Exhibits a 3'-5' exonuclease activity with a preference for single-stranded DNA, suggesting roles in DNA proofreading and repair. The sequence is that of Nucleoside diphosphate kinase homolog 5 from Homo sapiens (Human).